The sequence spans 565 residues: METTTKKARSLYIPYAGPVLLEFPLLNKGSAFSVEERRNFNLSGLLPEVVESIEEQAERAWLQYQGFKTEIDKHIYLRNIQDTNETLFYRLVQNHLEEMMPVIYTPTVGAACERFSEIYRRARGVFISYPNRHNMDDILQNVPNHNIKVIVVTDGERILGLGDQGIGGMGIPIGKLSLYTACGGISPAYTLPVVLDVGTNNQQLLNDPLYMGWRHPRITDDEYYAFVDEFIQAVKQRWPDILLQFEDFAQKNAMPLLTRYRDEICSFNDDIQGTAAVTVGTLIAASRAAGSQLSEQKIVFLGAGSAGCGIAEQIIAQTQREGLSEDAARQNVFMVDRFGLLTDRMPNLLPFQAKLVQKCDNLQHWDTENDVLSLLDVVRNVKPDILIGVSGQTGLFTEEIIREMHKHCPRPIVMPLSNPTSRVEATPQDIIAWTEGNALVATGSPFSPVIWKDKIYPIAQCNNAYIFPGIGLGVIASGASRITDEMLMSASETLAKHSPLVNNGEGLVLPALKDIQVVSRAIAFAVGKMAQQQGVAVKTSAEALQQAIDDNFWKPEYRDYRRTSI.

Catalysis depends on Tyr104, which acts as the Proton donor. Residue Arg157 coordinates NAD(+). The active-site Proton acceptor is the Lys175. Glu246, Asp247, and Asp270 together coordinate a divalent metal cation. NAD(+) is bound by residues Asp270 and Asn418.

The protein belongs to the malic enzymes family. Homotetramer. The cofactor is Mg(2+). Mn(2+) is required as a cofactor.

It carries out the reaction (S)-malate + NAD(+) = pyruvate + CO2 + NADH. The catalysed reaction is oxaloacetate + H(+) = pyruvate + CO2. The protein is NAD-dependent malic enzyme of Salmonella newport (strain SL254).